The chain runs to 187 residues: Large ribosomal subunit protein bL21 (187 aa).

A disordered region spans residues 157 to 187; sequence KVAKKAVKKTVKKATKTGAKKKAAKKTSKKA.

This sequence belongs to the bacterial ribosomal protein bL21 family. As to quaternary structure, part of the 50S ribosomal subunit. Contacts protein L20.

Functionally, this protein binds to 23S rRNA in the presence of protein L20. The sequence is that of Large ribosomal subunit protein bL21 from Bdellovibrio bacteriovorus (strain ATCC 15356 / DSM 50701 / NCIMB 9529 / HD100).